Consider the following 468-residue polypeptide: Sorting and assembly machinery component 50 homolog A (468 aa).

Positions 1 to 24 are disordered; sequence MGTVHARSLDPLPMNGPDFGSPDD. Positions 44-124 constitute a POTRA domain; that stretch reads VVVQRVHFEG…LDVTFEVTEL (81 aa).

Belongs to the SAM50/omp85 family. In terms of assembly, associates with the mitochondrial contact site and cristae organizing system (MICOS) complex (also known as MINOS or MitOS complex).

It localises to the mitochondrion outer membrane. Functionally, may play a role in the maintenance of the structure of mitochondrial cristae. The sequence is that of Sorting and assembly machinery component 50 homolog A (samm50-a) from Xenopus laevis (African clawed frog).